The primary structure comprises 748 residues: Catalase-peroxidase (748 aa).

The tryptophyl-tyrosyl-methioninium (Trp-Tyr) (with M-264) cross-link spans 92–238 (WHSAGTYRIG…LAAVQMGLIY (147 aa)). Histidine 93 functions as the Proton acceptor in the catalytic mechanism. Residues 238–264 (YVNPEGPDGNPDPIASARDIRDTFARM) constitute a cross-link (tryptophyl-tyrosyl-methioninium (Tyr-Met) (with W-92)). Heme b is bound at residue histidine 279.

This sequence belongs to the peroxidase family. Peroxidase/catalase subfamily. Homodimer or homotetramer. The cofactor is heme b. Formation of the three residue Trp-Tyr-Met cross-link is important for the catalase, but not the peroxidase activity of the enzyme.

The catalysed reaction is H2O2 + AH2 = A + 2 H2O. The enzyme catalyses 2 H2O2 = O2 + 2 H2O. In terms of biological role, bifunctional enzyme with both catalase and broad-spectrum peroxidase activity. This chain is Catalase-peroxidase, found in Xanthomonas euvesicatoria pv. vesicatoria (strain 85-10) (Xanthomonas campestris pv. vesicatoria).